A 546-amino-acid chain; its full sequence is Cytochrome P450 monooxygenase 219 (546 aa).

The N-terminal stretch at 1–22 (MATLIVLLYGLLAFGTVWLVRR) is a signal peptide. 2 N-linked (GlcNAc...) asparagine glycosylation sites follow: Asn367 and Asn441. Cys487 contacts heme.

It belongs to the cytochrome P450 family. The cofactor is heme.

It functions in the pathway secondary metabolite biosynthesis. Cytochrome P450 monooxygenase that is able to use testosterone, anthracene, carbazole, pyrene, phenanthrene and trans-stilbene as substrates for oxidation. These multifunctional properties against a series of polycyclic aromatic hydrocarbons (PAHs) suggest that CYP219 would play important roles, at least in part, in fungal metabolic systems involved in xenobiotic detoxification. The sequence is that of Cytochrome P450 monooxygenase 219 from Postia placenta (strain ATCC 44394 / Madison 698-R) (Brown rot fungus).